The chain runs to 213 residues: Cytochrome b6 (213 aa).

A helical membrane pass occupies residues 30 to 50 (IFFCLGGLTLLCFIVQCLTGI). C33 provides a ligand contact to heme c. The heme b site is built by H84 and H98. 3 consecutive transmembrane segments (helical) span residues 88–108 (CQLMILLVFLHMLRVYYTGAF), 114–134 (LNWVAGCFLLVLSLALAFTGY), and 184–204 (LHVMILPAVAIIFLVAHFIMI). Residues H185 and H200 each contribute to the heme b site.

This sequence belongs to the cytochrome b family. PetB subfamily. In terms of assembly, the subunits of the cytochrome bc complex are a Rieske Fe-S protein (PetC), cytochrome b6 (PetB), subunit IV (PetD), and a diheme cytochrome c (PetX). Requires heme b as cofactor. It depends on heme c as a cofactor.

The protein localises to the cell membrane. Its function is as follows. Component of the cytochrome bc complex which donates electrons to the photosynthetic reaction center. This Heliomicrobium gestii (Heliobacterium gestii) protein is Cytochrome b6.